The following is a 262-amino-acid chain: Transmembrane protein 81 (262 aa).

An N-terminal signal peptide occupies residues 1–30; that stretch reads MKAVATVFICGSLVLITYLPLVVTSPQTLA. Residues 31–225 are Extracellular-facing; that stretch reads IPEKLRQAVG…HLPGWRKKVS (195 aa). N-linked (GlcNAc...) asparagine glycosylation occurs at Asn45. An Ig-like domain is found at 83–171; it reads TNWICGMLHF…VQQLKNLKLV (89 aa). Cysteines 104 and 160 form a disulfide. Residue Asn211 is glycosylated (N-linked (GlcNAc...) asparagine). The helical transmembrane segment at 226-246 threads the bilayer; it reads LALGVGIAAGVVGGVLVNVAL. Residues 247–262 lie on the Cytoplasmic side of the membrane; sequence CRVLGGTGGNGNLSSL.

In terms of assembly, forms a complex with IZUMO1 and SPACA6 on spermatocyte cell membrane required for fertilization.

It localises to the cell membrane. Functionally, essential fertilization factor required for male fertility. Part of a conserved trimeric sperm complex with the essential fertilization factors IZUMO1 and SPACA6 which bridges sperm and oocyte membranes during fertilization by binding to IZUMO1R/JUNO on the oocyte. This Rattus norvegicus (Rat) protein is Transmembrane protein 81 (Tmem81).